The primary structure comprises 116 residues: Aspartate 1-decarboxylase (116 aa).

The active-site Schiff-base intermediate with substrate; via pyruvic acid is Ser-25. Ser-25 carries the post-translational modification Pyruvic acid (Ser). Thr-57 serves as a coordination point for substrate. The active-site Proton donor is Tyr-58. 73–75 (GAA) contacts substrate.

It belongs to the PanD family. Heterooctamer of four alpha and four beta subunits. The cofactor is pyruvate. Is synthesized initially as an inactive proenzyme, which is activated by self-cleavage at a specific serine bond to produce a beta-subunit with a hydroxyl group at its C-terminus and an alpha-subunit with a pyruvoyl group at its N-terminus.

The protein localises to the cytoplasm. The catalysed reaction is L-aspartate + H(+) = beta-alanine + CO2. Its pathway is cofactor biosynthesis; (R)-pantothenate biosynthesis; beta-alanine from L-aspartate: step 1/1. In terms of biological role, catalyzes the pyruvoyl-dependent decarboxylation of aspartate to produce beta-alanine. The chain is Aspartate 1-decarboxylase from Leptospira interrogans serogroup Icterohaemorrhagiae serovar Lai (strain 56601).